A 260-amino-acid polypeptide reads, in one-letter code: Indole-3-glycerol phosphate synthase (260 aa).

It belongs to the TrpC family.

It catalyses the reaction 1-(2-carboxyphenylamino)-1-deoxy-D-ribulose 5-phosphate + H(+) = (1S,2R)-1-C-(indol-3-yl)glycerol 3-phosphate + CO2 + H2O. It functions in the pathway amino-acid biosynthesis; L-tryptophan biosynthesis; L-tryptophan from chorismate: step 4/5. The chain is Indole-3-glycerol phosphate synthase from Staphylococcus saprophyticus subsp. saprophyticus (strain ATCC 15305 / DSM 20229 / NCIMB 8711 / NCTC 7292 / S-41).